Consider the following 127-residue polypeptide: Holo-[acyl-carrier-protein] synthase (127 aa).

Mg(2+) is bound by residues Asp-9 and Glu-58.

The protein belongs to the P-Pant transferase superfamily. AcpS family. Mg(2+) serves as cofactor.

It localises to the cytoplasm. It carries out the reaction apo-[ACP] + CoA = holo-[ACP] + adenosine 3',5'-bisphosphate + H(+). Its function is as follows. Transfers the 4'-phosphopantetheine moiety from coenzyme A to a Ser of acyl-carrier-protein. The sequence is that of Holo-[acyl-carrier-protein] synthase from Shewanella baltica (strain OS155 / ATCC BAA-1091).